The sequence spans 349 residues: tRNA pseudouridine synthase D (349 aa).

F27 is a substrate binding site. D80 acts as the Nucleophile in catalysis. N129 contacts substrate. The 149-residue stretch at G155–L303 folds into the TRUD domain. Residue F329 participates in substrate binding.

This sequence belongs to the pseudouridine synthase TruD family.

It catalyses the reaction uridine(13) in tRNA = pseudouridine(13) in tRNA. Its function is as follows. Responsible for synthesis of pseudouridine from uracil-13 in transfer RNAs. This is tRNA pseudouridine synthase D from Escherichia coli (strain SE11).